We begin with the raw amino-acid sequence, 301 residues long: tRNA-cytidine(32) 2-sulfurtransferase (301 aa).

The PP-loop motif signature appears at S55–S60. Residues C130, C133, and C221 each coordinate [4Fe-4S] cluster.

The protein belongs to the TtcA family. In terms of assembly, homodimer. Mg(2+) serves as cofactor. [4Fe-4S] cluster is required as a cofactor.

It is found in the cytoplasm. The enzyme catalyses cytidine(32) in tRNA + S-sulfanyl-L-cysteinyl-[cysteine desulfurase] + AH2 + ATP = 2-thiocytidine(32) in tRNA + L-cysteinyl-[cysteine desulfurase] + A + AMP + diphosphate + H(+). Its pathway is tRNA modification. Functionally, catalyzes the ATP-dependent 2-thiolation of cytidine in position 32 of tRNA, to form 2-thiocytidine (s(2)C32). The sulfur atoms are provided by the cysteine/cysteine desulfurase (IscS) system. The chain is tRNA-cytidine(32) 2-sulfurtransferase from Acinetobacter baumannii (strain SDF).